The sequence spans 430 residues: 3-phosphoshikimate 1-carboxyvinyltransferase (430 aa).

3-phosphoshikimate is bound by residues Lys-20, Ser-21, and Arg-25. A phosphoenolpyruvate-binding site is contributed by Lys-20. The phosphoenolpyruvate site is built by Gly-90 and Arg-118. 3-phosphoshikimate-binding residues include Ser-163, Ser-164, Gln-165, Ser-191, Asp-311, and Lys-338. Gln-165 contributes to the phosphoenolpyruvate binding site. Asp-311 serves as the catalytic Proton acceptor. Arg-342 and Arg-383 together coordinate phosphoenolpyruvate.

The protein belongs to the EPSP synthase family. In terms of assembly, monomer.

It is found in the cytoplasm. The enzyme catalyses 3-phosphoshikimate + phosphoenolpyruvate = 5-O-(1-carboxyvinyl)-3-phosphoshikimate + phosphate. It participates in metabolic intermediate biosynthesis; chorismate biosynthesis. Its function is as follows. Catalyzes the transfer of the enolpyruvyl moiety of phosphoenolpyruvate (PEP) to the 5-hydroxyl of shikimate-3-phosphate (S3P) to produce enolpyruvyl shikimate-3-phosphate and inorganic phosphate. In Methanosarcina acetivorans (strain ATCC 35395 / DSM 2834 / JCM 12185 / C2A), this protein is 3-phosphoshikimate 1-carboxyvinyltransferase.